We begin with the raw amino-acid sequence, 369 residues long: Flagellar P-ring protein (369 aa).

The first 23 residues, 1-23 (MRSLLRWMGVLLLCGLCAAPAQA), serve as a signal peptide directing secretion.

This sequence belongs to the FlgI family. The basal body constitutes a major portion of the flagellar organelle and consists of four rings (L,P,S, and M) mounted on a central rod.

Its subcellular location is the periplasm. The protein localises to the bacterial flagellum basal body. In terms of biological role, assembles around the rod to form the L-ring and probably protects the motor/basal body from shearing forces during rotation. The protein is Flagellar P-ring protein of Chromohalobacter salexigens (strain ATCC BAA-138 / DSM 3043 / CIP 106854 / NCIMB 13768 / 1H11).